We begin with the raw amino-acid sequence, 393 residues long: Staphopain B (393 aa).

A signal peptide spans 1–36 (MNSSYKSRVFNIISIIMVSMLILSLGAFANNNKAKA). Positions 37 to 219 (DSHSKQLEIN…KVEENEAIQE (183 aa)) are excised as a propeptide. Catalysis depends on residues cysteine 243, histidine 340, and asparagine 360.

The protein belongs to the peptidase C47 family. As to quaternary structure, in the cytoplasm, prematurely activated/folded SspB forms a stable non-covalent complex with SspC. Proteolytically cleaved by staphylococcal serine protease (SspA).

The protein localises to the secreted. Prematurely activated/folded staphopain B is inhibited by staphostatin B (SspC), which is probably required to protect staphylococcal cytoplasmic proteins from degradation by SspB. Functionally, cysteine protease that plays an important role in the inhibition of host innate immune response. Degrades host elastin, fibrogen, fibronectin and kininogen. Blocks phagocytosis of opsonised S.aureus by neutrophils and monocytes by inducing their death in a proteolytic activity-dependent manner. Decreases surface expression of the 'don't eat me' signal CD31 on neutrophils. Cleaves host galectin-3/LGALS3, thereby inhibiting the neutrophil-activating ability of the lectin. This chain is Staphopain B (sspB), found in Staphylococcus aureus (strain MSSA476).